The following is a 152-amino-acid chain: Large ribosomal subunit protein uL24 (152 aa).

The segment at 128–152 (VVEEKETSKTSEGGGKTIEETEGEK) is disordered.

This sequence belongs to the universal ribosomal protein uL24 family. In terms of assembly, part of the 50S ribosomal subunit.

One of two assembly initiator proteins, it binds directly to the 5'-end of the 23S rRNA, where it nucleates assembly of the 50S subunit. Functionally, located at the polypeptide exit tunnel on the outside of the subunit. The protein is Large ribosomal subunit protein uL24 of Staphylothermus marinus (strain ATCC 43588 / DSM 3639 / JCM 9404 / F1).